The chain runs to 428 residues: Glutamate-1-semialdehyde 2,1-aminomutase (428 aa).

Lys-265 is modified (N6-(pyridoxal phosphate)lysine).

This sequence belongs to the class-III pyridoxal-phosphate-dependent aminotransferase family. HemL subfamily. Homodimer. Pyridoxal 5'-phosphate serves as cofactor.

It localises to the cytoplasm. The enzyme catalyses (S)-4-amino-5-oxopentanoate = 5-aminolevulinate. It functions in the pathway porphyrin-containing compound metabolism; protoporphyrin-IX biosynthesis; 5-aminolevulinate from L-glutamyl-tRNA(Glu): step 2/2. The protein is Glutamate-1-semialdehyde 2,1-aminomutase of Aeromonas hydrophila subsp. hydrophila (strain ATCC 7966 / DSM 30187 / BCRC 13018 / CCUG 14551 / JCM 1027 / KCTC 2358 / NCIMB 9240 / NCTC 8049).